The sequence spans 375 residues: Queuine tRNA-ribosyltransferase (375 aa).

Catalysis depends on aspartate 90, which acts as the Proton acceptor. Substrate-binding positions include 90–94 (DSGGF), aspartate 144, glutamine 193, and glycine 220. Residues 251–257 (GVGTPED) form an RNA binding region. Catalysis depends on aspartate 270, which acts as the Nucleophile. Positions 275-279 (TRNAR) are RNA binding; important for wobble base 34 recognition. Residues cysteine 308, cysteine 310, cysteine 313, and histidine 339 each contribute to the Zn(2+) site.

This sequence belongs to the queuine tRNA-ribosyltransferase family. In terms of assembly, homodimer. Within each dimer, one monomer is responsible for RNA recognition and catalysis, while the other monomer binds to the replacement base PreQ1. It depends on Zn(2+) as a cofactor.

It carries out the reaction 7-aminomethyl-7-carbaguanine + guanosine(34) in tRNA = 7-aminomethyl-7-carbaguanosine(34) in tRNA + guanine. It functions in the pathway tRNA modification; tRNA-queuosine biosynthesis. Functionally, catalyzes the base-exchange of a guanine (G) residue with the queuine precursor 7-aminomethyl-7-deazaguanine (PreQ1) at position 34 (anticodon wobble position) in tRNAs with GU(N) anticodons (tRNA-Asp, -Asn, -His and -Tyr). Catalysis occurs through a double-displacement mechanism. The nucleophile active site attacks the C1' of nucleotide 34 to detach the guanine base from the RNA, forming a covalent enzyme-RNA intermediate. The proton acceptor active site deprotonates the incoming PreQ1, allowing a nucleophilic attack on the C1' of the ribose to form the product. After dissociation, two additional enzymatic reactions on the tRNA convert PreQ1 to queuine (Q), resulting in the hypermodified nucleoside queuosine (7-(((4,5-cis-dihydroxy-2-cyclopenten-1-yl)amino)methyl)-7-deazaguanosine). The sequence is that of Queuine tRNA-ribosyltransferase from Methylibium petroleiphilum (strain ATCC BAA-1232 / LMG 22953 / PM1).